A 356-amino-acid chain; its full sequence is tRNA-specific 2-thiouridylase MnmA (356 aa).

Residues 8 to 15 (GMSGGVDS) and methionine 34 contribute to the ATP site. Cysteine 103 acts as the Nucleophile in catalysis. Cysteine 103 and cysteine 199 are oxidised to a cystine. Glycine 127 is a binding site for ATP. Residues 149-151 (KDQ) form an interaction with tRNA region. Cysteine 199 serves as the catalytic Cysteine persulfide intermediate. The interval 305–306 (RY) is interaction with tRNA.

It belongs to the MnmA/TRMU family.

The protein localises to the cytoplasm. It carries out the reaction S-sulfanyl-L-cysteinyl-[protein] + uridine(34) in tRNA + AH2 + ATP = 2-thiouridine(34) in tRNA + L-cysteinyl-[protein] + A + AMP + diphosphate + H(+). In terms of biological role, catalyzes the 2-thiolation of uridine at the wobble position (U34) of tRNA, leading to the formation of s(2)U34. In Clostridium kluyveri (strain ATCC 8527 / DSM 555 / NBRC 12016 / NCIMB 10680 / K1), this protein is tRNA-specific 2-thiouridylase MnmA.